The primary structure comprises 247 residues: Uridylate kinase (247 aa).

14-17 (KLSG) is a binding site for ATP. The involved in allosteric activation by GTP stretch occupies residues 22–27 (GERGVG). Glycine 56 is a UMP binding site. ATP contacts are provided by glycine 57 and arginine 61. Residues aspartate 76 and 137–144 (IGSPYFST) each bind UMP. ATP-binding residues include asparagine 165, tyrosine 171, and aspartate 174.

The protein belongs to the UMP kinase family. Homohexamer.

Its subcellular location is the cytoplasm. It catalyses the reaction UMP + ATP = UDP + ADP. Its pathway is pyrimidine metabolism; CTP biosynthesis via de novo pathway; UDP from UMP (UMPK route): step 1/1. With respect to regulation, allosterically activated by GTP. Inhibited by UTP. Functionally, catalyzes the reversible phosphorylation of UMP to UDP. The polypeptide is Uridylate kinase (Streptococcus pneumoniae (strain ATCC BAA-255 / R6)).